A 618-amino-acid chain; its full sequence is uncharacterized protein (618 aa).

To Rhizobium NGR234A y4qD.

This is an uncharacterized protein from Sinorhizobium fredii (strain NBRC 101917 / NGR234).